Consider the following 467-residue polypeptide: 3-isopropylmalate dehydratase large subunit (467 aa).

[4Fe-4S] cluster-binding residues include Cys349, Cys409, and Cys412.

This sequence belongs to the aconitase/IPM isomerase family. LeuC type 1 subfamily. Heterodimer of LeuC and LeuD. Requires [4Fe-4S] cluster as cofactor.

The catalysed reaction is (2R,3S)-3-isopropylmalate = (2S)-2-isopropylmalate. It participates in amino-acid biosynthesis; L-leucine biosynthesis; L-leucine from 3-methyl-2-oxobutanoate: step 2/4. Catalyzes the isomerization between 2-isopropylmalate and 3-isopropylmalate, via the formation of 2-isopropylmaleate. This Ruegeria sp. (strain TM1040) (Silicibacter sp.) protein is 3-isopropylmalate dehydratase large subunit.